The primary structure comprises 349 residues: UDP-glucose 4-epimerase (349 aa).

Residues 10-12 (GFI), 31-35 (DNFAN), 66-67 (DV), and lysine 92 each bind NAD(+). 132–134 (SAT) contacts substrate. The active-site Proton acceptor is the tyrosine 158. NAD(+) contacts are provided by lysine 162 and tyrosine 186. Substrate contacts are provided by residues 186 to 188 (YFN), 207 to 209 (NNL), 225 to 227 (TIY), arginine 240, and 303 to 306 (RPGD).

Belongs to the NAD(P)-dependent epimerase/dehydratase family. The cofactor is NAD(+). Expressed in gonads, vulva, intestine, hypdermis and nervous system.

It carries out the reaction UDP-alpha-D-glucose = UDP-alpha-D-galactose. The catalysed reaction is UDP-N-acetyl-alpha-D-glucosamine = UDP-N-acetyl-alpha-D-galactosamine. It participates in carbohydrate metabolism; galactose metabolism. In terms of biological role, catalyzes two distinct but analogous reactions: the reversible epimerization of UDP-glucose to UDP-galactose and the reversible epimerization of UDP-N-acetylglucosamine to UDP-N-acetylgalactosamine. The reaction with UDP-Gal plays a critical role in the Leloir pathway of galactose catabolism in which galactose is converted to the glycolytic intermediate glucose 6-phosphate. It contributes to the catabolism of dietary galactose and enables the endogenous biosynthesis of both UDP-Gal and UDP-GalNAc when exogenous sources are limited. Both UDP-sugar interconversions are important for the synthesis of glycoproteins and glycolipids. The sequence is that of UDP-glucose 4-epimerase from Caenorhabditis elegans.